Here is a 273-residue protein sequence, read N- to C-terminus: MTKLIIHLVSDSSVQTVKHAANSALAQFTSIKQKLYHWPMIRNLELLNEVLSKIESKHGIVLYTIADQELRKALTKFCYELKIPCISVIGKIIKEMSVFSGIEIEKEQNYNYKFDKTYFDTLNAIDYAIRHDDGQMINELSESDIILIGPSRTSKTPTSVFLAYNGLKAANIPYVYNCPFPDFIEKNIDQLVVGLVINPNRLIEIREARLNLLQINENKSYTDFNIVQRECIEVRKICNQRNWPVIDVSTRSIEETAALIMRIYYNRKNKYHK.

149-156 (GPSRTSKT) provides a ligand contact to ADP.

The protein belongs to the pyruvate, phosphate/water dikinase regulatory protein family. PDRP subfamily.

The catalysed reaction is N(tele)-phospho-L-histidyl/L-threonyl-[pyruvate, phosphate dikinase] + ADP = N(tele)-phospho-L-histidyl/O-phospho-L-threonyl-[pyruvate, phosphate dikinase] + AMP + H(+). The enzyme catalyses N(tele)-phospho-L-histidyl/O-phospho-L-threonyl-[pyruvate, phosphate dikinase] + phosphate + H(+) = N(tele)-phospho-L-histidyl/L-threonyl-[pyruvate, phosphate dikinase] + diphosphate. Functionally, bifunctional serine/threonine kinase and phosphorylase involved in the regulation of the pyruvate, phosphate dikinase (PPDK) by catalyzing its phosphorylation/dephosphorylation. This Rickettsia typhi (strain ATCC VR-144 / Wilmington) protein is Putative pyruvate, phosphate dikinase regulatory protein.